We begin with the raw amino-acid sequence, 327 residues long: Vacuolar protein sorting-associated protein 26A (327 aa).

Positions 306 to 327 (RTNFHQRFESPESQASAEQPEM) are disordered. Ser315 is modified (phosphoserine). A compositionally biased stretch (polar residues) spans 316–327 (PESQASAEQPEM).

Belongs to the VPS26 family. As to quaternary structure, component of the heterotrimeric retromer cargo-selective complex (CSC), also described as vacuolar protein sorting subcomplex (VPS), formed by VPS26 (VPS26A or VPS26B), VPS29 and VPS35. The CSC has a highly elongated structure with VPS26 and VPS29 binding independently at opposite distal ends of VPS35 as central platform. The CSC is believed to associate with variable sorting nexins to form functionally distinct retromer complex variants. The originally described retromer complex (also called SNX-BAR retromer) is a pentamer containing the CSC and a heterodimeric membrane-deforming subcomplex formed between SNX1 or SNX2 and SNX5 or SNX6 (also called SNX-BAR subcomplex); the respective CSC and SNX-BAR subcomplexes associate with low affinity. The CSC associates with SNX3 to form a SNX3-retromer complex. The CSC associates with SNX27, the WASH complex and the SNX-BAR subcomplex to form the SNX27-retromer complex. Interacts with VPS29, VPS35, SNX27, SNX1, SNX2, SNX5, SNX6, SNX3, RAB7A, ECPAS, EHD1, WASHC5, SORL1.

The protein localises to the cytoplasm. It is found in the endosome membrane. Its subcellular location is the early endosome. In terms of biological role, acts as a component of the retromer cargo-selective complex (CSC). The CSC is believed to be the core functional component of retromer or respective retromer complex variants acting to prevent missorting of selected transmembrane cargo proteins into the lysosomal degradation pathway. The recruitment of the CSC to the endosomal membrane involves RAB7A and SNX3. The SNX-BAR retromer mediates retrograde transport of cargo proteins from endosomes to the trans-Golgi network (TGN) and is involved in endosome-to-plasma membrane transport for cargo protein recycling. The SNX3-retromer mediates the retrograde endosome-to-TGN transport of WLS distinct from the SNX-BAR retromer pathway. The SNX27-retromer is believed to be involved in endosome-to-plasma membrane trafficking and recycling of a broad spectrum of cargo proteins. The CSC complex seems to act as recruitment hub for other proteins, such as the WASH complex and TBC1D5. Required for retrograde transport of lysosomal enzyme receptor IGF2R. Required to regulate transcytosis of the polymeric immunoglobulin receptor (pIgR-pIgA). Required for the endosomal localization of WASHC2 (indicative for the WASH complex). Required for the endosomal localization of TBC1D5. Mediates retromer cargo recognition of SORL1 and is involved in trafficking of SORL1 implicated in sorting and processing of APP. Involved in retromer-independent lysosomal sorting of F2R. Involved in recycling of ADRB2. Acts redundantly with VSP26B in SNX-27 mediated endocytic recycling of SLC2A1/GLUT1. Enhances the affinity of SNX27 for PDZ-binding motifs in cargo proteins. The polypeptide is Vacuolar protein sorting-associated protein 26A (Vps26a) (Rattus norvegicus (Rat)).